The primary structure comprises 124 residues: UPF0231 protein Shewmr4_0656 (124 aa).

Belongs to the UPF0231 family.

This chain is UPF0231 protein Shewmr4_0656, found in Shewanella sp. (strain MR-4).